A 768-amino-acid polypeptide reads, in one-letter code: DNA replication licensing factor MCM3 homolog 1 (768 aa).

The region spanning 290–497 (TFDLLGNSLA…IDRQISEHVA (208 aa)) is the MCM domain. 340–347 (GDPSVAKS) contributes to the ATP binding site. The short motif at 472–475 (SRFD) is the Arginine finger element. The segment at 662–687 (MKQQAEHDAGATGGTVDGHGSSGNDP) is disordered. The span at 672–682 (ATGGTVDGHGS) shows a compositional bias: gly residues.

The protein belongs to the MCM family.

It localises to the nucleus. The catalysed reaction is ATP + H2O = ADP + phosphate + H(+). Functionally, acts as a factor that allows the DNA to undergo a single round of replication per cell cycle. Required for DNA replication and cell proliferation. May act as a component of the MCM complex which is the putative replicative helicase of the replication licensing system in eukaryotic cells. The polypeptide is DNA replication licensing factor MCM3 homolog 1 (ROA1) (Zea mays (Maize)).